The chain runs to 734 residues: Photosystem I P700 chlorophyll a apoprotein A2 (734 aa).

The next 8 helical transmembrane spans lie at 46–69 (IFASHFGQLAIIFLWTSGNLFHVA), 135–158 (LYTGALFLLFLSALSLIGGWLHLQ), 175–199 (LNHHLSGLFGVSSLAWTGHLVHVAI), 273–291 (MAHHHLAIAILFLIAGHMY), 330–353 (IHFQLGLALASLGVITSLVAQHMY), 369–395 (AALYTHHQYIAGFIMTGAFAHGAIFFI), 417–439 (AIISHLSWASLFLGFHTLGLYVH), and 517–535 (FLVHHAIALGLHTTTLILV). Residues Cys-559 and Cys-568 each contribute to the [4Fe-4S] cluster site. 2 helical membrane passes run 575–596 (AFYLAVFWMLNTIGWVTFYWHW) and 643–665 (LSVWAWMFLFGHLVWATGFMFLI). Chlorophyll a contacts are provided by His-654, Met-662, and Tyr-670. Trp-671 contributes to the phylloquinone binding site. A helical membrane pass occupies residues 707–727 (LVGLAHFSVGYIFTYAAFLIA).

The protein belongs to the PsaA/PsaB family. The PsaA/B heterodimer binds the P700 chlorophyll special pair and subsequent electron acceptors. PSI consists of a core antenna complex that captures photons, and an electron transfer chain that converts photonic excitation into a charge separation. The eukaryotic PSI reaction center is composed of at least 11 subunits. P700 is a chlorophyll a/chlorophyll a' dimer, A0 is one or more chlorophyll a, A1 is one or both phylloquinones and FX is a shared 4Fe-4S iron-sulfur center. serves as cofactor.

It localises to the plastid. It is found in the chloroplast thylakoid membrane. The catalysed reaction is reduced [plastocyanin] + hnu + oxidized [2Fe-2S]-[ferredoxin] = oxidized [plastocyanin] + reduced [2Fe-2S]-[ferredoxin]. In terms of biological role, psaA and PsaB bind P700, the primary electron donor of photosystem I (PSI), as well as the electron acceptors A0, A1 and FX. PSI is a plastocyanin-ferredoxin oxidoreductase, converting photonic excitation into a charge separation, which transfers an electron from the donor P700 chlorophyll pair to the spectroscopically characterized acceptors A0, A1, FX, FA and FB in turn. Oxidized P700 is reduced on the lumenal side of the thylakoid membrane by plastocyanin. The sequence is that of Photosystem I P700 chlorophyll a apoprotein A2 from Arabidopsis thaliana (Mouse-ear cress).